Here is an 872-residue protein sequence, read N- to C-terminus: FHIP family protein CBG19667 (872 aa).

Residues 800–841 (SRSSPRSADEHDSTLFYGRSTIPPPGRKPLLREPSHQETLDD) are disordered. The segment covering 829 to 841 (LLREPSHQETLDD) has biased composition (basic and acidic residues).

The protein belongs to the FHIP family.

The sequence is that of FHIP family protein CBG19667 from Caenorhabditis briggsae.